The chain runs to 416 residues: Glutamyl-tRNA reductase (416 aa).

Substrate is bound by residues 49 to 52 (TCNR), serine 105, 110 to 112 (EPQ), and glutamine 116. Cysteine 50 serves as the catalytic Nucleophile. 185-190 (GAGEMI) contributes to the NADP(+) binding site.

It belongs to the glutamyl-tRNA reductase family. In terms of assembly, homodimer.

It carries out the reaction (S)-4-amino-5-oxopentanoate + tRNA(Glu) + NADP(+) = L-glutamyl-tRNA(Glu) + NADPH + H(+). The protein operates within porphyrin-containing compound metabolism; protoporphyrin-IX biosynthesis; 5-aminolevulinate from L-glutamyl-tRNA(Glu): step 1/2. In terms of biological role, catalyzes the NADPH-dependent reduction of glutamyl-tRNA(Glu) to glutamate 1-semialdehyde (GSA). The chain is Glutamyl-tRNA reductase from Nitrosomonas europaea (strain ATCC 19718 / CIP 103999 / KCTC 2705 / NBRC 14298).